Reading from the N-terminus, the 344-residue chain is tRNA N6-adenosine threonylcarbamoyltransferase (344 aa).

Positions 111 and 115 each coordinate Fe cation. Substrate contacts are provided by residues 133–137 (LVSGG), Asp-166, Gly-179, and Asn-283. A Fe cation-binding site is contributed by Asp-311.

The protein belongs to the KAE1 / TsaD family. Fe(2+) is required as a cofactor.

Its subcellular location is the cytoplasm. It catalyses the reaction L-threonylcarbamoyladenylate + adenosine(37) in tRNA = N(6)-L-threonylcarbamoyladenosine(37) in tRNA + AMP + H(+). Its function is as follows. Required for the formation of a threonylcarbamoyl group on adenosine at position 37 (t(6)A37) in tRNAs that read codons beginning with adenine. Is involved in the transfer of the threonylcarbamoyl moiety of threonylcarbamoyl-AMP (TC-AMP) to the N6 group of A37, together with TsaE and TsaB. TsaD likely plays a direct catalytic role in this reaction. The protein is tRNA N6-adenosine threonylcarbamoyltransferase of Orientia tsutsugamushi (strain Boryong) (Rickettsia tsutsugamushi).